The primary structure comprises 165 residues: Phosphopantetheine adenylyltransferase (165 aa).

Substrate is bound at residue Thr9. ATP contacts are provided by residues 9-10 (TF) and His17. The substrate site is built by Lys41, Leu73, and Arg87. Residues 88 to 90 (GLR), Glu98, and 123 to 129 (YQFISGT) each bind ATP.

It belongs to the bacterial CoaD family. As to quaternary structure, homohexamer. Mg(2+) serves as cofactor.

The protein localises to the cytoplasm. The enzyme catalyses (R)-4'-phosphopantetheine + ATP + H(+) = 3'-dephospho-CoA + diphosphate. It functions in the pathway cofactor biosynthesis; coenzyme A biosynthesis; CoA from (R)-pantothenate: step 4/5. Functionally, reversibly transfers an adenylyl group from ATP to 4'-phosphopantetheine, yielding dephospho-CoA (dPCoA) and pyrophosphate. This is Phosphopantetheine adenylyltransferase from Burkholderia lata (strain ATCC 17760 / DSM 23089 / LMG 22485 / NCIMB 9086 / R18194 / 383).